A 240-amino-acid chain; its full sequence is Transcriptional activator protein VanR (240 aa).

Residues 169–234 enclose the HTH luxR-type domain; the sequence is DAKPRAVLTA…QAITKAILGG (66 aa). A DNA-binding region (H-T-H motif) is located at residues 193 to 212; sequence AWEIATIINTSERTVKFHFS.

It belongs to the autoinducer-regulated transcriptional regulatory protein family.

Functionally, probable transcriptional activator. Binds to autoinducer molecule ODHL. The sequence is that of Transcriptional activator protein VanR (vanR) from Vibrio anguillarum (Listonella anguillarum).